A 287-amino-acid chain; its full sequence is HTH-type transcriptional regulator MurR (287 aa).

Residues 1-77 (MLYLAKMRNA…MALIEEHSVS (77 aa)) enclose the HTH rpiR-type domain. The segment at residues 37 to 56 (SRNMAKQLEISQSSIVKFAQ) is a DNA-binding region (H-T-H motif). Residues 128-268 (VINLISKAPL…FVGMVQLNDV (141 aa)) enclose the SIS domain.

In terms of assembly, homotetramer.

It functions in the pathway amino-sugar metabolism; N-acetylmuramate degradation [regulation]. Its function is as follows. Represses the expression of the murPQ operon involved in the uptake and degradation of N-acetylmuramic acid (MurNAc). Binds to two adjacent inverted repeats within the operator region. MurNAc 6-phosphate, the substrate of MurQ, is the specific inducer that weakens binding of MurR to the operator. The sequence is that of HTH-type transcriptional regulator MurR from Salmonella arizonae (strain ATCC BAA-731 / CDC346-86 / RSK2980).